A 459-amino-acid polypeptide reads, in one-letter code: MMISEDISEPSSPDTPFDDSDLLNSSMTDDVSAQLAASGPIGVRAAAAIATGKKRKRPHSFETNPSIRRRQQTRLIRKLKATIDEYATRVGQQAVVLTCTPGKHDGNFKVFGAAPLENIMRNLKGIVLQDLDNALAQRAPQPSNENSDLYELPPLVIDGIPTSVNKMTQAQLRAFIPLMLKYSTGRGKPGWGKESCRPVWWPSDLPWANVRSDVRSEDEKRKVSWTHALVTIVINCYKHHGRDDLLPEFIEDKCKEIEASQNQVASLPTATLLPSHAVVHTINNPDGTVSLIQVDTGATVATLADVTQVQQLTNLQTLQQVRLQPLQIQHALGNQQAEATQAVQTLAEVAAAQGGDGELTEGQTVTTLPEGTQLVLASDGSLQAINDGTAQGIVIPASVYQTVVAGDGQPIQIANVNIAQQSGGGTTMAAIKNAVMQSQPIPSQVATLVVNAASHDQHT.

The tract at residues 1–25 (MMISEDISEPSSPDTPFDDSDLLNS) is disordered.

It belongs to the NRF1/Ewg family.

Its subcellular location is the nucleus. Its function is as follows. Transcriptional regulator that interacts with specific sites in the control region of the cyIIIa actin gene. Also binds specifically to similar target sites located in the regulatory region of the SM50 gene. The protein is DNA-binding protein P3A2 of Strongylocentrotus purpuratus (Purple sea urchin).